Reading from the N-terminus, the 193-residue chain is Glycerol-3-phosphate acyltransferase (193 aa).

Helical transmembrane passes span 2–22, 51–71, 78–98, 112–132, and 154–174; these read AFIISIIIAYLLGSLSFAVIV, QAAFYVLLGDAAKGLIAVLIA, GVSLAFVGLVAVLGHLFPVYF, VLLGLSFWIALFVIATWVIVV, and IIAGRTDYLFPVLIIAILLIW.

The protein belongs to the PlsY family. As to quaternary structure, probably interacts with PlsX.

The protein localises to the cell inner membrane. The enzyme catalyses an acyl phosphate + sn-glycerol 3-phosphate = a 1-acyl-sn-glycero-3-phosphate + phosphate. It functions in the pathway lipid metabolism; phospholipid metabolism. In terms of biological role, catalyzes the transfer of an acyl group from acyl-phosphate (acyl-PO(4)) to glycerol-3-phosphate (G3P) to form lysophosphatidic acid (LPA). This enzyme utilizes acyl-phosphate as fatty acyl donor, but not acyl-CoA or acyl-ACP. In Coxiella burnetii (strain CbuG_Q212) (Coxiella burnetii (strain Q212)), this protein is Glycerol-3-phosphate acyltransferase.